The chain runs to 388 residues: Beta-1,4-galactosyltransferase 5 (388 aa).

The Cytoplasmic segment spans residues 1-14; the sequence is MRVRRGLLRLPRRS. Residues 15-35 form a helical; Signal-anchor for type II membrane protein membrane-spanning segment; that stretch reads LLAALFFFSLSSSLLYFVYVA. At 36 to 388 the chain is on the lumenal side; the sequence is PGIVNTYLFM…TPELAQVTEY (353 aa). N-linked (GlcNAc...) asparagine glycans are attached at residues N77, N81, N90, N111, and N128. C114 and C158 form a disulfide bridge. UDP-alpha-D-galactose is bound by residues 169-173, 208-210, 235-236, Y264, and W296; these read PFRNR, FNR, and VD. Cysteines 229 and 248 form a disulfide. D236 contributes to the Mn(2+) binding site. 298–301 is an N-acetyl-D-glucosamine binding site; it reads GEDD. 329 to 330 contacts UDP-alpha-D-galactose; the sequence is YH. R340 lines the N-acetyl-D-glucosamine pocket. N-linked (GlcNAc...) asparagine glycans are attached at residues N364 and N373.

The protein belongs to the glycosyltransferase 7 family. In terms of assembly, (Microbial infection) Interacts with porcine reproductive and respiratory syndrome virus GP5. Mn(2+) is required as a cofactor.

The protein resides in the golgi apparatus. It is found in the golgi stack membrane. The enzyme catalyses a beta-D-glucosyl-(1&lt;-&gt;1')-N-acylsphing-4-enine + UDP-alpha-D-galactose = a beta-D-Gal-(1-&gt;4)-beta-D-Glc-(1&lt;-&gt;1)-Cer(d18:1(4E)) + UDP + H(+). It participates in protein modification; protein glycosylation. It functions in the pathway sphingolipid metabolism. Its function is as follows. Catalyzes the synthesis of lactosylceramide (LacCer) via the transfer of galactose from UDP-galactose to glucosylceramide (GlcCer). LacCer is the starting point in the biosynthesis of all gangliosides (membrane-bound glycosphingolipids) which play pivotal roles in the CNS including neuronal maturation and axonal and myelin formation. Plays a role in the glycosylation of BMPR1A and regulation of its protein stability. Essential for extraembryonic development during early embryogenesis. In terms of biological role, (Microbial infection) May play a role in the glycosylation of porcine reproductive and respiratory syndrome virus GP5 protein and may be involved in the regulation of viral proliferation. The chain is Beta-1,4-galactosyltransferase 5 (B4GALT5) from Sus scrofa (Pig).